The following is a 108-amino-acid chain: Transcription factor AmrZ (108 aa).

In terms of biological role, functions both as a transcriptional activator and a repressor of multiple genes encoding virulence factors as well as genes involved in environmental adaptation. Represses genes involved in iron homeostasis. Modulates intracellular levels of c-di-GMP which in turn regulates swimming motility and biofilm formation. The sequence is that of Transcription factor AmrZ from Pseudomonas ogarae (strain DSM 112162 / CECT 30235 / F113).